Consider the following 70-residue polypeptide: Gas vesicle protein A (70 aa).

This sequence belongs to the gas vesicle GvpA family. The gas vesicle shell is 2 nm thick and consists of a single layer of this protein. It forms helical ribs nearly perpendicular to the long axis of the vesicle.

The protein localises to the gas vesicle shell. Gas vesicles are hollow, gas filled proteinaceous nanostructures found in some microorganisms. During planktonic growth they allow positioning of the organism at a favorable depth for light or nutrient acquisition. GvpA forms the protein shell. The polypeptide is Gas vesicle protein A (Bradyrhizobium sp. (strain ORS 278)).